A 117-amino-acid polypeptide reads, in one-letter code: Nascent polypeptide-associated complex protein (117 aa).

The NAC-A/B domain maps to P9–V77.

This sequence belongs to the NAC-alpha family. Homodimer. Interacts with the ribosome. Binds ribosomal RNA.

Contacts the emerging nascent chain on the ribosome. The protein is Nascent polypeptide-associated complex protein of Methanothermobacter marburgensis (strain ATCC BAA-927 / DSM 2133 / JCM 14651 / NBRC 100331 / OCM 82 / Marburg) (Methanobacterium thermoautotrophicum).